The primary structure comprises 687 residues: Chloride channel protein ClC-Ka (687 aa).

Transmembrane regions (helical) follow at residues 52–72 (FLVALGVLMALISYAMNFAIG), 94–114 (LSWTVYPVALLSFSSGFSQSI), 161–181 (IFLGKVGPFVHLSVMISAYLG), 204–224 (AAAVGVATVFAAPFSGVLFSI), and 236–256 (YWRGFFAATCGAFMFRLLGVF). 4 residues coordinate Ca(2+): Glu-259, Glu-261, Asp-278, and Glu-281. The next 6 helical transmembrane spans lie at 282–302 (IFFFVALGFICGVLSCAYLFC), 325–345 (PSYAALVALVLASITYPPGVG), 396–416 (FTIFGTLAFFLVMKFWMLILA), 417–437 (TTIPMPAGYFMPIFIIGAAIG), 458–478 (VNPIMPGGYALAGAAAFSGAV), and 486–506 (LLAFELTGQIVHALPVLMAVL). Over 507–687 (AANAISQNCQ…STLINPPAPK (181 aa)) the chain is Cytoplasmic. CBS domains lie at 551 to 609 (MNCN…QPAS) and 626 to 687 (CPTQ…PAPK).

It belongs to the chloride channel (TC 2.A.49) family. CLCNKA subfamily. As to quaternary structure, homodimer. Interacts with BSND. In terms of tissue distribution, expressed predominantly in the kidney. Expressed strongly in the cortical thick ascending limb and the distal convoluted tubule, with minor expression in the S3 segment of the proximal tubule and the cortical collecting tubule.

The protein localises to the basolateral cell membrane. It carries out the reaction chloride(in) = chloride(out). The enzyme catalyses bromide(in) = bromide(out). The catalysed reaction is nitrate(in) = nitrate(out). It catalyses the reaction iodide(out) = iodide(in). Activated by extracellular Ca(2+) and inhibited by extracellular acidic pH. Anion-selective channel permeable to small monovalent anions with ion selectivity for chloride &gt; bromide &gt; nitrate &gt; iodide. Forms a homodimeric channel where each subunit has its own ion conduction pathway. Conducts double-barreled currents controlled by two types of gates, two fast gates that control each subunit independently and a slow common gate that opens and shuts off both subunits simultaneously. Assembles with the regulatory subunit BSND/Barttin for sorting at the basolateral plasma membrane domain. CLCNKA:BSND channels are activated upon membrane hyperpolarization mostly controlled by fast gating. Mediates transepithelial chloride transport from the lumen to interstitial compartment along the thin ascending limb of Henle's loop, contributing to generation of hypertonic medullary interstitium as a countercurrent system to achieve urine concentration. Conducts chloride currents in the stria vascularis of the inner ear to establish the endocochlear potential necessary for normal hearing. In Rattus norvegicus (Rat), this protein is Chloride channel protein ClC-Ka.